The sequence spans 95 residues: Protein TRACHEARY ELEMENT DIFFERENTIATION-RELATED 6 (95 aa).

The Extracellular portion of the chain corresponds to 1 to 3 (MAT). A helical transmembrane segment spans residues 4-24 (IFIVFVSFGCVFVLGIAAFVL). The Cytoplasmic segment spans residues 25 to 95 (CCLIKKWKCS…KLGTASTSKA (71 aa)).

Interacts with the secondary cell wall (SCW)-related cellulose synthase complex. In terms of tissue distribution, accumulates in cells differentiating into tracheary element (TE) which undergo secondary cell wall (SCW) formation.

Its subcellular location is the cell membrane. It localises to the secreted. The protein resides in the cell wall. Functionally, involved in the secondary cell wall (SCW) formation of vessel elements (e.g. protoxylem and metaxylem), thus promoting tracheary element (TE) differentiation. The chain is Protein TRACHEARY ELEMENT DIFFERENTIATION-RELATED 6 from Zinnia elegans (Garden zinnia).